The primary structure comprises 253 residues: DnaJ homolog subfamily C member 8 (253 aa).

A2 carries the post-translational modification N-acetylalanine. At S35 the chain carries Phosphoserine. One can recognise a J domain in the interval 57 to 124; it reads NPFEVLQIDP…QKKRALDVIQ (68 aa). K146 carries the N6-acetyllysine modification. Residues 181–222 show a composition bias toward basic and acidic residues; sequence EAKEMHERKRQREEEIEAQEKAKREREWQKNFEESRDGRVDS. Residues 181-253 are disordered; that stretch reads EAKEMHERKR…PPKVKMEQRE (73 aa). Short sequence motifs (nuclear localization signal) lie at residues 189–192 and 203–206; these read KRQR and KRER. S222 carries the phosphoserine modification. Residues 231 to 240 show a composition bias toward basic residues; the sequence is KGKKEKKNRT. The tract at residues 232–253 is essential for polyglutamine aggregation suppression; it reads GKKEKKNRTFLRPPKVKMEQRE.

As to quaternary structure, interacts with SRPK1. Interacts with HSP70 (HSPA1A or HSPA1B). As to expression, ubiquitous.

The protein resides in the nucleus. Its function is as follows. Suppresses polyglutamine (polyQ) aggregation of ATXN3 in neuronal cells. The chain is DnaJ homolog subfamily C member 8 (DNAJC8) from Homo sapiens (Human).